The following is a 1138-amino-acid chain: Trafficking protein particle complex subunit 9 (1138 aa).

Residues Ser-557 and Ser-944 each carry the phosphoserine modification.

This sequence belongs to the NIBP family. Component of the multisubunit TRAPP (transport protein particle) complex, which includes at least TRAPPC2, TRAPPC2L, TRAPPC3, TRAPPC3L, TRAPPC4, TRAPPC5, TRAPPC8, TRAPPC9, TRAPPC10, TRAPPC11 and TRAPPC12. Directly interacts with IKBKB and MAP3K14.

The protein localises to the golgi apparatus. Its subcellular location is the cis-Golgi network. It localises to the endoplasmic reticulum. The protein resides in the cytoplasm. Its function is as follows. Functions as an activator of NF-kappa-B through increased phosphorylation of the IKK complex. May function in neuronal cells differentiation. May play a role in vesicular transport from endoplasmic reticulum to Golgi. The protein is Trafficking protein particle complex subunit 9 (TRAPPC9) of Bos taurus (Bovine).